Reading from the N-terminus, the 576-residue chain is MQPEQQVMLNQVWAELIIEELVRNGVKHICIAPGSRSTPLTLAASEHALLSIHTHFDERGLGFLALGIAKASNDPVAVIVTSGTAVANLLPSVAESGLTKEKLVLLTADRPVELINCGANQAINQQGIFSSHVCHSLQLPSPSQNVPAQWLLSRLDQACFVQQEQGGAIHINCPFPEPFYGKKDDSLLVDYLAPIQNWKADTSSYIQQTPYFSHVTLSPNWMQTARKKGVVIIGKVSLEEANCAAQLAKELGWPVLADPQSGYYSEWAHYDLWLQNSACFELLSEVECVLQFGARLVSKRLGAWLKNYQQAYYLIDPHSELLNESCHAHVRYRADISTWCQTHADSLADRDCVFDHAPSVHWSESLKVASQNALALARSMACNSETLSELSFALTVGQKANDCDWFVGNSLIVRLLDMTGELNQKNVYTNRGASGIDGLVATAVGVQLANDKPLLALVGDTSLLYDLNSLALLKQATQPMVVVVMNNDGGGIFDLLPVNEKKKDDFYRMPHQLEFSHAAAMFGLSYHRPETLSCAMSMINDGLEKGIHLIEINTPAGQSGEELTRLFQTIQHAALF.

It belongs to the TPP enzyme family. MenD subfamily. As to quaternary structure, homodimer. Requires Mg(2+) as cofactor. The cofactor is Mn(2+). Thiamine diphosphate serves as cofactor.

It catalyses the reaction isochorismate + 2-oxoglutarate + H(+) = 5-enolpyruvoyl-6-hydroxy-2-succinyl-cyclohex-3-ene-1-carboxylate + CO2. Its pathway is quinol/quinone metabolism; 1,4-dihydroxy-2-naphthoate biosynthesis; 1,4-dihydroxy-2-naphthoate from chorismate: step 2/7. It participates in quinol/quinone metabolism; menaquinone biosynthesis. Its function is as follows. Catalyzes the thiamine diphosphate-dependent decarboxylation of 2-oxoglutarate and the subsequent addition of the resulting succinic semialdehyde-thiamine pyrophosphate anion to isochorismate to yield 2-succinyl-5-enolpyruvyl-6-hydroxy-3-cyclohexene-1-carboxylate (SEPHCHC). The chain is 2-succinyl-5-enolpyruvyl-6-hydroxy-3-cyclohexene-1-carboxylate synthase from Aliivibrio fischeri (strain ATCC 700601 / ES114) (Vibrio fischeri).